A 655-amino-acid chain; its full sequence is Large subunit GTPase 1 homolog (655 aa).

The disordered stretch occupies residues 1-31; it reads MGRRRAPGGGSLGRVLIRHQTQRSRSHRHTD. Over residues 16–28 the composition is skewed to basic residues; it reads LIRHQTQRSRSHR. Residues Ser-93 and Ser-97 each carry the phosphoserine modification. Positions 164–441 constitute a CP-type G domain; sequence WRQLWRVIER…LCDCPGLVMP (278 aa). 212 to 215 is a binding site for GTP; it reads NKAD. The residue at position 252 (Ser-252) is a Phosphoserine. The disordered stretch occupies residues 253-359; it reads KDEVNSVAGE…ENSQMSNKSH (107 aa). The segment covering 288 to 327 has biased composition (acidic residues); the sequence is EESESDDDDSEYEDCQEDEEEDWQTCSEEDSNPEEGQEEG. Positions 328 to 339 are enriched in basic and acidic residues; sequence GCDRDQKEHGPE. Residues 344 to 359 are compositionally biased toward polar residues; the sequence is QSRASPENSQMSNKSH. Residues 390 to 397 and 434 to 437 contribute to the GTP site; these read GYPNVGKS and DCPG. Residues 625 to 655 are disordered; it reads SAENVPGKPWKKHGNRNKKEKSRRLYRHLDV. Over residues 633–655 the composition is skewed to basic residues; it reads PWKKHGNRNKKEKSRRLYRHLDV.

Belongs to the TRAFAC class YlqF/YawG GTPase family. LSG1 subfamily.

Its subcellular location is the cytoplasm. The protein resides in the endoplasmic reticulum. It localises to the nucleus. It is found in the cajal body. It catalyses the reaction GTP + H2O = GDP + phosphate + H(+). Its function is as follows. Functions as a GTPase. May act by mediating the release of NMD3 from the 60S ribosomal subunit after export into the cytoplasm during the 60S ribosomal subunit maturation. The chain is Large subunit GTPase 1 homolog from Rattus norvegicus (Rat).